The primary structure comprises 451 residues: Probable tyrosyl-DNA phosphodiesterase (451 aa).

Residues 1–34 (MKRTIQETPGPSSTTVPPPKKLNSQRNGSNLEPG) are disordered. A compositionally biased stretch (polar residues) spans 22–32 (LNSQRNGSNLE). The active-site Nucleophile is the H131. Residue K133 participates in substrate binding. Residues 266-269 (SIGS) form an interaction with DNA region. Catalysis depends on H356, which acts as the Proton donor/acceptor. Residue K358 coordinates substrate.

This sequence belongs to the tyrosyl-DNA phosphodiesterase family.

The protein resides in the nucleus. In terms of biological role, DNA repair enzyme that can remove a variety of covalent adducts from DNA through hydrolysis of a 3'-phosphodiester bond, giving rise to DNA with a free 3' phosphate. Catalyzes the hydrolysis of dead-end complexes between DNA and the topoisomerase I active site tyrosine residue. Hydrolyzes 3'-phosphoglycolates on protruding 3' ends on DNA double-strand breaks due to DNA damage by radiation and free radicals. Acts on blunt-ended double-strand DNA breaks and on single-stranded DNA. May have low 3'exonuclease activity and may be able to remove a single nucleoside from the 3'end of DNA and RNA molecules with 3'hydroxyl groups. Has no exonuclease activity towards DNA or RNA with a 3'phosphate. The chain is Probable tyrosyl-DNA phosphodiesterase from Caenorhabditis elegans.